Consider the following 86-residue polypeptide: Triple QxxK/R motif-containing protein (86 aa).

A helical transmembrane segment spans residues 51–71 (VGLMLAAILALLLAFYAFFYL).

It belongs to the TRIQK family. As to expression, expressed in heart, brain, spleen, lung, liver, skeletal muscle, kidney and testis.

Its subcellular location is the endoplasmic reticulum membrane. Functionally, may play a role in cell growth and maintenance of cell morphology. The chain is Triple QxxK/R motif-containing protein (Triqk) from Mus musculus (Mouse).